The sequence spans 201 residues: Lipopolysaccharide core heptose(II)-phosphate phosphatase (201 aa).

The first 35 residues, 1–35 (MLAFTLRFIKNKRYLATLAGALVIIAGLTSQHAWS), serve as a signal peptide directing secretion.

The protein belongs to the phosphoglycerate mutase family. Ais subfamily.

The protein localises to the periplasm. Its pathway is bacterial outer membrane biogenesis; lipopolysaccharide metabolism. In terms of biological role, catalyzes the dephosphorylation of heptose(II) of the outer membrane lipopolysaccharide core. The protein is Lipopolysaccharide core heptose(II)-phosphate phosphatase of Salmonella newport (strain SL254).